Here is an 86-residue protein sequence, read N- to C-terminus: Toxin Aam3 (86 aa).

The N-terminal stretch at 1–19 (MNYLVMISLALLFMIGVES) is a signal peptide. Residues 21–85 (RDGYIAQPNN…PIKIIGQKCT (65 aa)) enclose the LCN-type CS-alpha/beta domain. Intrachain disulfides connect Cys31–Cys84, Cys35–Cys56, Cys42–Cys66, and Cys46–Cys68.

This sequence belongs to the long (4 C-C) scorpion toxin superfamily. Sodium channel inhibitor family. Alpha subfamily. The C-terminal basic residue is removed by a carboxypeptidase. As to expression, expressed by the venom gland.

Its subcellular location is the secreted. Functionally, alpha toxins bind voltage-independently at site-3 of sodium channels (Nav) and inhibit the inactivation of the activated channels, thereby blocking neuronal transmission. In Androctonus amoreuxi (African fattail scorpion), this protein is Toxin Aam3.